The primary structure comprises 288 residues: MAMTSTMQLLVLSFLVIASLFLGATVAPPASLISTPDQALKDKADLIVAKDGSGNFTTVNEAVAAAPENGVKPFVIYIKEGLYKEVIRIGKKKTNLTLVGDGRDLTVLSGDLNGVDGIKTFDSATLAVDESGFMAQDLCIRNTAGPEKRQAVALRISTDMTIIYRCRIDAYQDTLYAYSGRQFYRDCYITGTVDFIFGRAAAVFQYCQIEARKPGIGQTNILTAQSREEDTATSGFSFQKCNISASSDLTPIKGTVKTFLGRPWRAFSRVVFMESFIDDVIDRAGWTP.

Positions 1 to 27 (MAMTSTMQLLVLSFLVIASLFLGATVA) are cleaved as a signal peptide. N-linked (GlcNAc...) asparagine glycans are attached at residues Asn55 and Asn95. Substrate is bound by residues Thr120 and Gln150. Asp173 (proton donor) is an active-site residue. The active-site Nucleophile is Asp194. A glycan (N-linked (GlcNAc...) asparagine) is linked at Asn242. Substrate is bound by residues Arg262 and Trp264.

This sequence belongs to the pectinesterase family.

It localises to the secreted. It is found in the cell wall. The catalysed reaction is [(1-&gt;4)-alpha-D-galacturonosyl methyl ester](n) + n H2O = [(1-&gt;4)-alpha-D-galacturonosyl](n) + n methanol + n H(+). Its pathway is glycan metabolism; pectin degradation; 2-dehydro-3-deoxy-D-gluconate from pectin: step 1/5. In terms of biological role, acts in the modification of cell walls via demethylesterification of cell wall pectin. The protein is Probable pectinesterase 56 (PME56) of Arabidopsis thaliana (Mouse-ear cress).